The following is an 827-amino-acid chain: Glycerol-3-phosphate acyltransferase (827 aa).

Positions 325 to 330 (CHRSHM) match the HXXXXD motif motif.

It belongs to the GPAT/DAPAT family.

The protein localises to the cell inner membrane. The catalysed reaction is sn-glycerol 3-phosphate + an acyl-CoA = a 1-acyl-sn-glycero-3-phosphate + CoA. It functions in the pathway phospholipid metabolism; CDP-diacylglycerol biosynthesis; CDP-diacylglycerol from sn-glycerol 3-phosphate: step 1/3. This is Glycerol-3-phosphate acyltransferase from Shigella boydii serotype 4 (strain Sb227).